Consider the following 397-residue polypeptide: Ribosomal RNA large subunit methyltransferase I (397 aa).

The PUA domain maps to 2 to 82 (TTSIYLVKGR…EVINVDFFVK (81 aa)).

Belongs to the methyltransferase superfamily. RlmI family.

Its subcellular location is the cytoplasm. The enzyme catalyses cytidine(1962) in 23S rRNA + S-adenosyl-L-methionine = 5-methylcytidine(1962) in 23S rRNA + S-adenosyl-L-homocysteine + H(+). In terms of biological role, specifically methylates the cytosine at position 1962 (m5C1962) of 23S rRNA. The polypeptide is Ribosomal RNA large subunit methyltransferase I (Photobacterium profundum (strain SS9)).